A 610-amino-acid chain; its full sequence is ATP-dependent zinc metalloprotease FtsH (610 aa).

The Cytoplasmic segment spans residues 1–5 (MNRSN). Residues 6 to 26 (IWNLLFTILIIVTLFWLARFF) traverse the membrane as a helical segment. Topologically, residues 27-107 (YVENSPVSKL…SGERSGSSSF (81 aa)) are periplasmic. A helical membrane pass occupies residues 108-128 (WINVLGTLIPTILFIVVWLFI). The Cytoplasmic portion of the chain corresponds to 129–610 (MRSLSGRNNQ…LSEEFEKVVE (482 aa)). Residues Gly-164, 204 to 208 (GTGKT), Leu-209, His-343, and Glu-371 contribute to the ATP site. His-423 contacts Zn(2+). The active site involves Glu-424. His-427 and Asp-500 together coordinate Zn(2+).

The protein in the central section; belongs to the AAA ATPase family. This sequence in the C-terminal section; belongs to the peptidase M41 family. In terms of assembly, the isolated ADP-bound cytosolic domain forms a 6-fold symmetric protease disk and a 2-fold symmetric AAA ATPase ring. In the absence of nucleotide the AAA ATPase ring also forms symmetric hexamers. It depends on Zn(2+) as a cofactor.

The protein resides in the cell inner membrane. Functionally, acts as a processive, ATP-dependent zinc metallopeptidase for both cytoplasmic and membrane proteins. Plays a role in the quality control of integral membrane proteins. The chain is ATP-dependent zinc metalloprotease FtsH from Thermotoga maritima (strain ATCC 43589 / DSM 3109 / JCM 10099 / NBRC 100826 / MSB8).